The chain runs to 310 residues: Homoserine O-acetyltransferase (310 aa).

C142 acts as the Acyl-thioester intermediate in catalysis. Substrate contacts are provided by K163 and S192. Residue H235 is the Proton acceptor of the active site. Residue E237 is part of the active site. Position 249 (R249) interacts with substrate.

The protein belongs to the MetA family.

Its subcellular location is the cytoplasm. It catalyses the reaction L-homoserine + acetyl-CoA = O-acetyl-L-homoserine + CoA. It participates in amino-acid biosynthesis; L-methionine biosynthesis via de novo pathway; O-acetyl-L-homoserine from L-homoserine: step 1/1. Functionally, transfers an acetyl group from acetyl-CoA to L-homoserine, forming acetyl-L-homoserine. The protein is Homoserine O-acetyltransferase of Parabacteroides distasonis (strain ATCC 8503 / DSM 20701 / CIP 104284 / JCM 5825 / NCTC 11152).